The primary structure comprises 371 residues: Queuine tRNA-ribosyltransferase (371 aa).

Aspartate 90 serves as the catalytic Proton acceptor. Substrate-binding positions include 90 to 94 (DSGGF), aspartate 144, glutamine 189, and glycine 215. The RNA binding stretch occupies residues 246-252 (GVGTPEN). Catalysis depends on aspartate 265, which acts as the Nucleophile. The RNA binding; important for wobble base 34 recognition stretch occupies residues 270 to 274 (TRNAR). Zn(2+) contacts are provided by cysteine 303, cysteine 305, cysteine 308, and histidine 334.

The protein belongs to the queuine tRNA-ribosyltransferase family. In terms of assembly, homodimer. Within each dimer, one monomer is responsible for RNA recognition and catalysis, while the other monomer binds to the replacement base PreQ1. It depends on Zn(2+) as a cofactor.

The catalysed reaction is 7-aminomethyl-7-carbaguanine + guanosine(34) in tRNA = 7-aminomethyl-7-carbaguanosine(34) in tRNA + guanine. It participates in tRNA modification; tRNA-queuosine biosynthesis. In terms of biological role, catalyzes the base-exchange of a guanine (G) residue with the queuine precursor 7-aminomethyl-7-deazaguanine (PreQ1) at position 34 (anticodon wobble position) in tRNAs with GU(N) anticodons (tRNA-Asp, -Asn, -His and -Tyr). Catalysis occurs through a double-displacement mechanism. The nucleophile active site attacks the C1' of nucleotide 34 to detach the guanine base from the RNA, forming a covalent enzyme-RNA intermediate. The proton acceptor active site deprotonates the incoming PreQ1, allowing a nucleophilic attack on the C1' of the ribose to form the product. After dissociation, two additional enzymatic reactions on the tRNA convert PreQ1 to queuine (Q), resulting in the hypermodified nucleoside queuosine (7-(((4,5-cis-dihydroxy-2-cyclopenten-1-yl)amino)methyl)-7-deazaguanosine). The polypeptide is Queuine tRNA-ribosyltransferase (Helicobacter pylori (strain HPAG1)).